A 288-amino-acid polypeptide reads, in one-letter code: ATP synthase subunit a (288 aa).

The next 6 membrane-spanning stretches (helical) occupy residues 47–67 (LDSM…FWMV), 104–124 (LIAP…LMDL), 157–177 (DPNI…FYSI), 199–219 (PIVQ…TLIA), 237–257 (LIFI…SVPW), and 258–278 (AIFH…LTIV).

Belongs to the ATPase A chain family. In terms of assembly, F-type ATPases have 2 components, CF(1) - the catalytic core - and CF(0) - the membrane proton channel. CF(1) has five subunits: alpha(3), beta(3), gamma(1), delta(1), epsilon(1). CF(0) has three main subunits: a(1), b(2) and c(9-12). The alpha and beta chains form an alternating ring which encloses part of the gamma chain. CF(1) is attached to CF(0) by a central stalk formed by the gamma and epsilon chains, while a peripheral stalk is formed by the delta and b chains.

The protein localises to the cell inner membrane. In terms of biological role, key component of the proton channel; it plays a direct role in the translocation of protons across the membrane. This Psychrobacter cryohalolentis (strain ATCC BAA-1226 / DSM 17306 / VKM B-2378 / K5) protein is ATP synthase subunit a.